Consider the following 208-residue polypeptide: 3-demethoxyubiquinol 3-hydroxylase (208 aa).

Glu-57, Glu-87, His-90, Glu-139, Glu-171, and His-174 together coordinate Fe cation.

Belongs to the COQ7 family. Fe cation serves as cofactor.

The protein resides in the cell membrane. It carries out the reaction a 5-methoxy-2-methyl-3-(all-trans-polyprenyl)benzene-1,4-diol + AH2 + O2 = a 3-demethylubiquinol + A + H2O. It participates in cofactor biosynthesis; ubiquinone biosynthesis. Catalyzes the hydroxylation of 2-nonaprenyl-3-methyl-6-methoxy-1,4-benzoquinol during ubiquinone biosynthesis. This is 3-demethoxyubiquinol 3-hydroxylase from Janthinobacterium sp. (strain Marseille) (Minibacterium massiliensis).